Here is a 618-residue protein sequence, read N- to C-terminus: UvrABC system protein C (618 aa).

The 80-residue stretch at 13-92 folds into the GIY-YIG domain; sequence DKPGVYLMKN…IKKYRPKYNI (80 aa). The 36-residue stretch at 204–239 folds into the UVR domain; it reads LDIVENFKLNMEKAAENLEFEKAAMLRDKINIIEKI.

It belongs to the UvrC family. As to quaternary structure, interacts with UvrB in an incision complex.

It is found in the cytoplasm. The UvrABC repair system catalyzes the recognition and processing of DNA lesions. UvrC both incises the 5' and 3' sides of the lesion. The N-terminal half is responsible for the 3' incision and the C-terminal half is responsible for the 5' incision. The protein is UvrABC system protein C of Clostridium botulinum (strain Loch Maree / Type A3).